The following is a 350-amino-acid chain: RING finger protein 44 (350 aa).

Residues 298 to 339 (CVVCFSDFEVRQLLRVLPCNHEFHAKCVDKWLKANRTCPICR) form an RING-type; atypical zinc finger.

This is RING finger protein 44 (Rnf44) from Rattus norvegicus (Rat).